The following is a 333-amino-acid chain: Nucleoid-associated protein APJL_0454 (333 aa).

Belongs to the YejK family.

Its subcellular location is the cytoplasm. It localises to the nucleoid. The protein is Nucleoid-associated protein APJL_0454 of Actinobacillus pleuropneumoniae serotype 3 (strain JL03).